The primary structure comprises 183 residues: Dual-action ribosomal maturation protein DarP (183 aa).

This sequence belongs to the DarP family.

It localises to the cytoplasm. In terms of biological role, member of a network of 50S ribosomal subunit biogenesis factors which assembles along the 30S-50S interface, preventing incorrect 23S rRNA structures from forming. Promotes peptidyl transferase center (PTC) maturation. The sequence is that of Dual-action ribosomal maturation protein DarP from Shigella flexneri.